The primary structure comprises 430 residues: Histidine--tRNA ligase (430 aa).

This sequence belongs to the class-II aminoacyl-tRNA synthetase family. Homodimer.

Its subcellular location is the cytoplasm. The catalysed reaction is tRNA(His) + L-histidine + ATP = L-histidyl-tRNA(His) + AMP + diphosphate + H(+). This Chlorobaculum parvum (strain DSM 263 / NCIMB 8327) (Chlorobium vibrioforme subsp. thiosulfatophilum) protein is Histidine--tRNA ligase.